The primary structure comprises 147 residues: MSSSRVGLRLAACLLNVSEAGRKYIVENIAKAALLDKNGKKHPQVSVLNIFSDQDYKRSVITIATSVDKLGLAEDLVLHVPGCSVFLFGEADLPEKRSLVQRRKQLGWFTRRDFSALQPDLGAAPSQRCGLTGSEHGFCFALFFFFF.

Residues 1-20 form the signal peptide; the sequence is MSSSRVGLRLAACLLNVSEA.

This sequence belongs to the formiminotransferase family. In terms of tissue distribution, widely expressed with highest levels in liver and skeletal muscle, and moderate levels in kidney, bone and pancreas.

This chain is Formiminotransferase N-terminal subdomain-containing protein (FTCDNL1), found in Homo sapiens (Human).